The chain runs to 89 residues: Small ribosomal subunit protein uS15 (89 aa).

It belongs to the universal ribosomal protein uS15 family. In terms of assembly, part of the 30S ribosomal subunit. Forms a bridge to the 50S subunit in the 70S ribosome, contacting the 23S rRNA.

Functionally, one of the primary rRNA binding proteins, it binds directly to 16S rRNA where it helps nucleate assembly of the platform of the 30S subunit by binding and bridging several RNA helices of the 16S rRNA. In terms of biological role, forms an intersubunit bridge (bridge B4) with the 23S rRNA of the 50S subunit in the ribosome. The sequence is that of Small ribosomal subunit protein uS15 from Bordetella avium (strain 197N).